The following is a 452-amino-acid chain: NADH-quinone oxidoreductase subunit H (452 aa).

The next 9 membrane-spanning stretches (helical) occupy residues 28–48 (IILIKALAVFVFLMLCVLMMI), 96–116 (VIYIAAPMIAAIPAFFAFSVI), 136–156 (LPVAVLLVLATASLGVYGIVL), 177–197 (VISYEIAMGLSFIAVFIYAGT), 210–230 (IWFAVILFPSFVIYLITMIGE), 264–286 (AEYVNMVTVSAMSVTLFLGGYLA), 301–321 (WWPALWWLIKFVCVMFLFVWV), 335–355 (KLGWKILIPIQLVWITAVAVI), and 366–386 (YVTAIVVGVFGLLVFLGLWAW).

This sequence belongs to the complex I subunit 1 family. In terms of assembly, NDH-1 is composed of 14 different subunits. Subunits NuoA, H, J, K, L, M, N constitute the membrane sector of the complex.

It is found in the cell membrane. The catalysed reaction is a quinone + NADH + 5 H(+)(in) = a quinol + NAD(+) + 4 H(+)(out). NDH-1 shuttles electrons from NADH, via FMN and iron-sulfur (Fe-S) centers, to quinones in the respiratory chain. The immediate electron acceptor for the enzyme in this species is believed to be ubiquinone. Couples the redox reaction to proton translocation (for every two electrons transferred, four hydrogen ions are translocated across the cytoplasmic membrane), and thus conserves the redox energy in a proton gradient. This subunit may bind ubiquinone. The protein is NADH-quinone oxidoreductase subunit H of Thermobifida fusca (strain YX).